The chain runs to 123 residues: Small ribosomal subunit protein uS12 (123 aa).

The residue at position 89 (Asp89) is a 3-methylthioaspartic acid.

This sequence belongs to the universal ribosomal protein uS12 family. In terms of assembly, part of the 30S ribosomal subunit. Contacts proteins S8 and S17. May interact with IF1 in the 30S initiation complex.

With S4 and S5 plays an important role in translational accuracy. Its function is as follows. Interacts with and stabilizes bases of the 16S rRNA that are involved in tRNA selection in the A site and with the mRNA backbone. Located at the interface of the 30S and 50S subunits, it traverses the body of the 30S subunit contacting proteins on the other side and probably holding the rRNA structure together. The combined cluster of proteins S8, S12 and S17 appears to hold together the shoulder and platform of the 30S subunit. The polypeptide is Small ribosomal subunit protein uS12 (Granulibacter bethesdensis (strain ATCC BAA-1260 / CGDNIH1)).